The primary structure comprises 409 residues: MTSPIHVNSEIGKLKTVLLKRPGKEVENITPDIMYRLLFDDIPYLPTIQKEHDQFAQTLRDNGVEVLYLENLAAEAIDAGDVKEAFLDKMLNESHIKSPQVQAALKDYLISMATLDMVEKIMAGVRTNEIDIKSKALIDVSADDDYPFYMDPMPNLYFTRDPAASMGDGLTINKMTFEARQRESMFMEVIMQHHPRFANQGAQVWRDRDHIDRMEGGDELILSDKVLAIGISQRTSAQSIEELAKVLFANHSGFEKILAIKIPHKHAMMHLDTVFTMIDYDKFTIHPGIQGAGGMVDTYILEPGNNDEIKITHQTDLEKVLRDALEVPELTLIPCGGGDAVVAPREQWNDGSNTLAIAPGVVVTYDRNYVSNENLRQYGIKVIEVPSSELSRGRGGPRCMSMPLVRRKT.

Cys399 functions as the Amidino-cysteine intermediate in the catalytic mechanism.

Belongs to the arginine deiminase family.

The protein resides in the cytoplasm. It carries out the reaction L-arginine + H2O = L-citrulline + NH4(+). It participates in amino-acid degradation; L-arginine degradation via ADI pathway; carbamoyl phosphate from L-arginine: step 1/2. The polypeptide is Arginine deiminase (arcA) (Latilactobacillus sakei (Lactobacillus sakei)).